A 184-amino-acid chain; its full sequence is ATP synthase subunit b, chloroplastic (184 aa).

A helical transmembrane segment spans residues 27-49 (FATNPINLSVVLGVLIFFGKGVL).

This sequence belongs to the ATPase B chain family. F-type ATPases have 2 components, F(1) - the catalytic core - and F(0) - the membrane proton channel. F(1) has five subunits: alpha(3), beta(3), gamma(1), delta(1), epsilon(1). F(0) has four main subunits: a(1), b(1), b'(1) and c(10-14). The alpha and beta chains form an alternating ring which encloses part of the gamma chain. F(1) is attached to F(0) by a central stalk formed by the gamma and epsilon chains, while a peripheral stalk is formed by the delta, b and b' chains.

It localises to the plastid. It is found in the chloroplast thylakoid membrane. In terms of biological role, f(1)F(0) ATP synthase produces ATP from ADP in the presence of a proton or sodium gradient. F-type ATPases consist of two structural domains, F(1) containing the extramembraneous catalytic core and F(0) containing the membrane proton channel, linked together by a central stalk and a peripheral stalk. During catalysis, ATP synthesis in the catalytic domain of F(1) is coupled via a rotary mechanism of the central stalk subunits to proton translocation. Its function is as follows. Component of the F(0) channel, it forms part of the peripheral stalk, linking F(1) to F(0). In Amborella trichopoda, this protein is ATP synthase subunit b, chloroplastic.